The sequence spans 357 residues: NADH-quinone oxidoreductase subunit H (357 aa).

8 helical membrane passes run 18–38 (VAWM…PIIL), 92–112 (VLFV…WAVV), 127–147 (LLYI…AGWA), 165–185 (VSYE…SGSL), 206–226 (FLSW…ISAV), 268–288 (ILLS…PIDI), 294–314 (IPGW…FVWF), and 329–349 (LGWK…AIWM).

This sequence belongs to the complex I subunit 1 family. NDH-1 is composed of 14 different subunits. Subunits NuoA, H, J, K, L, M, N constitute the membrane sector of the complex.

The protein localises to the cell inner membrane. It carries out the reaction a quinone + NADH + 5 H(+)(in) = a quinol + NAD(+) + 4 H(+)(out). NDH-1 shuttles electrons from NADH, via FMN and iron-sulfur (Fe-S) centers, to quinones in the respiratory chain. The immediate electron acceptor for the enzyme in this species is believed to be ubiquinone. Couples the redox reaction to proton translocation (for every two electrons transferred, four hydrogen ions are translocated across the cytoplasmic membrane), and thus conserves the redox energy in a proton gradient. This subunit may bind ubiquinone. The protein is NADH-quinone oxidoreductase subunit H of Bordetella bronchiseptica (strain ATCC BAA-588 / NCTC 13252 / RB50) (Alcaligenes bronchisepticus).